The chain runs to 656 residues: Translation factor GUF1, mitochondrial (656 aa).

The transit peptide at 1–28 (MWKGLLQSTRAAWRGPCVRAPRLPFFRR) directs the protein to the mitochondrion. A tr-type G domain is found at 55 to 235 (ERYRNFSIVA…NVIENIPGPD (181 aa)). GTP-binding positions include 64–71 (AHVDHGKS), 128–132 (DTPGH), and 182–185 (NKID).

The protein belongs to the TRAFAC class translation factor GTPase superfamily. Classic translation factor GTPase family. LepA subfamily.

The protein resides in the mitochondrion inner membrane. It catalyses the reaction GTP + H2O = GDP + phosphate + H(+). In terms of biological role, promotes mitochondrial protein synthesis. May act as a fidelity factor of the translation reaction, by catalyzing a one-codon backward translocation of tRNAs on improperly translocated ribosomes. Binds to mitochondrial ribosomes in a GTP-dependent manner. The chain is Translation factor GUF1, mitochondrial from Yarrowia lipolytica (strain CLIB 122 / E 150) (Yeast).